The primary structure comprises 938 residues: Bifunctional glutamine synthetase adenylyltransferase/adenylyl-removing enzyme (938 aa).

The interval 1–457 (MLEADAARLK…HFDHVFGDPS (457 aa)) is adenylyl removase. Residues 460–938 (AHTLDSMWAA…ALWTIVFGSA (479 aa)) are adenylyl transferase.

This sequence belongs to the GlnE family. Mg(2+) is required as a cofactor.

The enzyme catalyses [glutamine synthetase]-O(4)-(5'-adenylyl)-L-tyrosine + phosphate = [glutamine synthetase]-L-tyrosine + ADP. It carries out the reaction [glutamine synthetase]-L-tyrosine + ATP = [glutamine synthetase]-O(4)-(5'-adenylyl)-L-tyrosine + diphosphate. Functionally, involved in the regulation of glutamine synthetase GlnA, a key enzyme in the process to assimilate ammonia. When cellular nitrogen levels are high, the C-terminal adenylyl transferase (AT) inactivates GlnA by covalent transfer of an adenylyl group from ATP to specific tyrosine residue of GlnA, thus reducing its activity. Conversely, when nitrogen levels are low, the N-terminal adenylyl removase (AR) activates GlnA by removing the adenylyl group by phosphorolysis, increasing its activity. The regulatory region of GlnE binds the signal transduction protein PII (GlnB) which indicates the nitrogen status of the cell. The chain is Bifunctional glutamine synthetase adenylyltransferase/adenylyl-removing enzyme from Aromatoleum aromaticum (strain DSM 19018 / LMG 30748 / EbN1) (Azoarcus sp. (strain EbN1)).